Reading from the N-terminus, the 565-residue chain is Periplasmic trehalase (565 aa).

The signal sequence occupies residues 1 to 30; sequence MKSPAPSRPQKMALIPACIFLCFAALSVQA. Substrate contacts are provided by residues arginine 152, 159–160, asparagine 196, 205–207, 277–279, and glycine 310; these read WD, RSQ, and RPE. Residues aspartate 312 and glutamate 496 each act as proton donor/acceptor in the active site. Glutamate 511 is a substrate binding site. The tract at residues 540–565 is disordered; sequence DNVPATHPTVKSATTQPSTKEAQPTP. The segment covering 548–565 has biased composition (polar residues); sequence TVKSATTQPSTKEAQPTP.

It belongs to the glycosyl hydrolase 37 family. Monomer.

It is found in the periplasm. It catalyses the reaction alpha,alpha-trehalose + H2O = alpha-D-glucose + beta-D-glucose. Its function is as follows. Provides the cells with the ability to utilize trehalose at high osmolarity by splitting it into glucose molecules that can subsequently be taken up by the phosphotransferase-mediated uptake system. In Shigella flexneri, this protein is Periplasmic trehalase.